The following is a 210-amino-acid chain: Putative methyltransferase ECU09_1500 (210 aa).

The protein belongs to the methyltransferase superfamily.

In Encephalitozoon cuniculi (strain GB-M1) (Microsporidian parasite), this protein is Putative methyltransferase ECU09_1500.